The primary structure comprises 129 residues: Small ribosomal subunit protein uS11 (129 aa).

It belongs to the universal ribosomal protein uS11 family. As to quaternary structure, part of the 30S ribosomal subunit. Interacts with proteins S7 and S18. Binds to IF-3.

In terms of biological role, located on the platform of the 30S subunit, it bridges several disparate RNA helices of the 16S rRNA. Forms part of the Shine-Dalgarno cleft in the 70S ribosome. In Oleidesulfovibrio alaskensis (strain ATCC BAA-1058 / DSM 17464 / G20) (Desulfovibrio alaskensis), this protein is Small ribosomal subunit protein uS11.